The primary structure comprises 328 residues: Biotin synthase (328 aa).

A Radical SAM core domain is found at 48 to 278 (FTGNSASLCS…GKSLSVCGGR (231 aa)). Residues C66, C70, and C73 each contribute to the [4Fe-4S] cluster site. [2Fe-2S] cluster is bound by residues S143 and C203.

It belongs to the radical SAM superfamily. Biotin synthase family. Homodimer. The cofactor is [4Fe-4S] cluster. Requires [2Fe-2S] cluster as cofactor.

It carries out the reaction (4R,5S)-dethiobiotin + (sulfur carrier)-SH + 2 reduced [2Fe-2S]-[ferredoxin] + 2 S-adenosyl-L-methionine = (sulfur carrier)-H + biotin + 2 5'-deoxyadenosine + 2 L-methionine + 2 oxidized [2Fe-2S]-[ferredoxin]. It participates in cofactor biosynthesis; biotin biosynthesis; biotin from 7,8-diaminononanoate: step 2/2. Its function is as follows. Catalyzes the conversion of dethiobiotin (DTB) to biotin by the insertion of a sulfur atom into dethiobiotin via a radical-based mechanism. The polypeptide is Biotin synthase (Pelobacter propionicus (strain DSM 2379 / NBRC 103807 / OttBd1)).